Here is a 289-residue protein sequence, read N- to C-terminus: N-acetylmuramoyl-L-alanine amidase AmiA (289 aa).

Residues 1-34 (MSTFKPLKTLTSRRQVLKAGLAALTLSGMSQAIA) constitute a signal peptide (tat-type signal). Residues 39 to 63 (LKTSNGHSKPKAKKSGGKRVVVLDP) form a disordered region. Over residues 46–55 (SKPKAKKSGG) the composition is skewed to basic residues. The 215-residue stretch at 59-273 (VVLDPGHGGI…IATAIAEGVI (215 aa)) folds into the MurNAc-LAA domain.

This sequence belongs to the N-acetylmuramoyl-L-alanine amidase 3 family. Exported by the Tat system. The position of the signal peptide cleavage has not been experimentally proven. Can also be exported by the Sec system.

The protein localises to the periplasm. The enzyme catalyses Hydrolyzes the link between N-acetylmuramoyl residues and L-amino acid residues in certain cell-wall glycopeptides.. Cell-wall hydrolase involved in septum cleavage during cell division. Can also act as powerful autolysin in the presence of murein synthesis inhibitors. This is N-acetylmuramoyl-L-alanine amidase AmiA (amiA) from Escherichia coli (strain K12).